Consider the following 212-residue polypeptide: MFIIGLTGGIASGKSTVAGILKDLGAIIIDTDRVAREVVAPGRPAYREIVAAFGPRVLRPDGQLDRPALARIIFNDATARELLNAITHPRIRELVQKRLEDLRRANPEAIVVIEAPLLFEAGMEGMVDAVWAVTAPAPVRLKRLMARDKLSLAEAESRLRAQGEETARLRRATRVIPTGGDLEATRASVRAAWQELQRHLADDPEPGGAPWV.

In terms of domain architecture, DPCK spans 3–207; the sequence is IIGLTGGIAS…RHLADDPEPG (205 aa). 11-16 contributes to the ATP binding site; that stretch reads ASGKST.

It belongs to the CoaE family.

It localises to the cytoplasm. It carries out the reaction 3'-dephospho-CoA + ATP = ADP + CoA + H(+). The protein operates within cofactor biosynthesis; coenzyme A biosynthesis; CoA from (R)-pantothenate: step 5/5. Functionally, catalyzes the phosphorylation of the 3'-hydroxyl group of dephosphocoenzyme A to form coenzyme A. This is Dephospho-CoA kinase from Moorella thermoacetica (strain ATCC 39073 / JCM 9320).